The sequence spans 712 residues: Secretin OutD (712 aa).

The signal sequence occupies residues 1–27 (MLGKGIKKSWGWLGLTVLLLGSPCGWA). Residues 28 to 124 (AEFSASFKGT…LANNEQPGVG (97 aa)) form an N0 region. Positions 126–190 (ELVTRVVPLN…DIVNTVDKTG (65 aa)) are N1. Residues 191–264 (DREMITVSLN…MIRQLDRKQV (74 aa)) are N2. The tract at residues 267 to 394 (GGTKVIYLKY…DLEQVINQLD (128 aa)) is N3. A disordered region spans residues 288–342 (GNGTSGNRNSSSTNSSRPSSTRSSSTLNNSNSSSSGSSSGSGSSSSSSSSSMGFG). The secretin stretch occupies residues 399-651 (QVLVEAIIAE…LFLRPTIIRD (253 aa)). The s domain stretch occupies residues 653-712 (QQYQQASISKYNSFNNEQQQQRGQGNSVLDNNTLRLSGGNTYTFRQVQSSISAFYQPEGR).

This sequence belongs to the bacterial secretin family. GSP D subfamily. As to quaternary structure, forms a cylindrical channel with 15 subunits.

It is found in the cell outer membrane. Involved in a type II secretion system (T2SS, formerly general secretion pathway, GSP) for the export of proteins. Required for the translocation of the multiple pectic enzymes. This subunit forms the outer membrane channel. This is Secretin OutD (outD) from Dickeya chrysanthemi (Pectobacterium chrysanthemi).